The chain runs to 222 residues: MAEKQKAVAAQEKVAISKRDPWALKKWFSVYAPPYLGGVFLAEVPAAEAQKLVKRTLEVTLYDITKDISHLPIKLRFQIHRVDGLNASTRFKGLELTRDYLRSLIRRGTSKIMAITDVKTKDGWVMRVAVLGVTTHRVGTAQKSAIRKRFIEVVTKKAAEADIGQFLKEVLEGTLAADLFIAGKKIAPMRKVEVAKIKVLRYPPEEERVAVKEVAAEAAASS.

The protein belongs to the eukaryotic ribosomal protein eS1 family.

This is Small ribosomal subunit protein eS1 from Pyrobaculum calidifontis (strain DSM 21063 / JCM 11548 / VA1).